Reading from the N-terminus, the 128-residue chain is Nucleoside diphosphate kinase B (128 aa).

Methionine 1 bears the N-acetylmethionine mark. The ATP site is built by lysine 9, phenylalanine 39, threonine 70, arginine 81, and asparagine 91. Histidine 94 functions as the Pros-phosphohistidine intermediate in the catalytic mechanism.

The protein belongs to the NDK family. Requires Mg(2+) as cofactor.

The protein localises to the cytoplasm. It is found in the nucleus. Its subcellular location is the cell projection. The protein resides in the lamellipodium. It localises to the ruffle. The enzyme catalyses a 2'-deoxyribonucleoside 5'-diphosphate + ATP = a 2'-deoxyribonucleoside 5'-triphosphate + ADP. It catalyses the reaction a ribonucleoside 5'-diphosphate + ATP = a ribonucleoside 5'-triphosphate + ADP. Major role in the synthesis of nucleoside triphosphates other than ATP. This is Nucleoside diphosphate kinase B (nme2) from Merluccius bilinearis (Silver hake).